A 266-amino-acid polypeptide reads, in one-letter code: Hydroxymethylpyrimidine/phosphomethylpyrimidine kinase (266 aa).

Q44 is a 4-amino-5-hydroxymethyl-2-methylpyrimidine binding site.

Belongs to the ThiD family. In terms of assembly, monomer.

The catalysed reaction is 4-amino-5-hydroxymethyl-2-methylpyrimidine + ATP = 4-amino-2-methyl-5-(phosphooxymethyl)pyrimidine + ADP + H(+). It catalyses the reaction 4-amino-2-methyl-5-(phosphooxymethyl)pyrimidine + ATP = 4-amino-2-methyl-5-(diphosphooxymethyl)pyrimidine + ADP. Its pathway is cofactor biosynthesis; thiamine diphosphate biosynthesis; 4-amino-2-methyl-5-diphosphomethylpyrimidine from 5-amino-1-(5-phospho-D-ribosyl)imidazole: step 2/3. It participates in cofactor biosynthesis; thiamine diphosphate biosynthesis; 4-amino-2-methyl-5-diphosphomethylpyrimidine from 5-amino-1-(5-phospho-D-ribosyl)imidazole: step 3/3. In terms of biological role, catalyzes the phosphorylation of hydroxymethylpyrimidine phosphate (HMP-P) to HMP-PP, and of HMP to HMP-P. Shows no activity with pyridoxal, pyridoxamine or pyridoxine. The chain is Hydroxymethylpyrimidine/phosphomethylpyrimidine kinase (thiD) from Escherichia coli (strain K12).